The following is a 205-amino-acid chain: Pyridoxal 5'-phosphate synthase subunit PdxT (205 aa).

52–54 is a binding site for L-glutamine; sequence GES. The active-site Nucleophile is the Cys84. L-glutamine is bound by residues Arg116 and 145 to 146; that span reads IR. Residues His185 and Glu187 each act as charge relay system in the active site.

This sequence belongs to the glutaminase PdxT/SNO family. In terms of assembly, in the presence of PdxS, forms a dodecamer of heterodimers. Only shows activity in the heterodimer.

It carries out the reaction aldehydo-D-ribose 5-phosphate + D-glyceraldehyde 3-phosphate + L-glutamine = pyridoxal 5'-phosphate + L-glutamate + phosphate + 3 H2O + H(+). The catalysed reaction is L-glutamine + H2O = L-glutamate + NH4(+). It functions in the pathway cofactor biosynthesis; pyridoxal 5'-phosphate biosynthesis. Its function is as follows. Catalyzes the hydrolysis of glutamine to glutamate and ammonia as part of the biosynthesis of pyridoxal 5'-phosphate. The resulting ammonia molecule is channeled to the active site of PdxS. This Staphylothermus marinus (strain ATCC 43588 / DSM 3639 / JCM 9404 / F1) protein is Pyridoxal 5'-phosphate synthase subunit PdxT.